The chain runs to 195 residues: Large ribosomal subunit protein eL15 (195 aa).

The interval 174–195 (GHGRLGSAKSRPSIRANGRLRR) is disordered.

It belongs to the eukaryotic ribosomal protein eL15 family.

This Picrophilus torridus (strain ATCC 700027 / DSM 9790 / JCM 10055 / NBRC 100828 / KAW 2/3) protein is Large ribosomal subunit protein eL15.